Reading from the N-terminus, the 157-residue chain is 3-hydroxybutyryl-CoA dehydratase (157 aa).

In terms of domain architecture, MaoC-like spans 22–120; the sequence is KKEISSSDVV…IPERRRARLA (99 aa).

It carries out the reaction (3R)-3-hydroxybutanoyl-CoA = (2E)-butenoyl-CoA + H2O. In terms of biological role, involved in the regeneration of glyoxylate from a molecule of acetyl-CoA. In Methylorubrum extorquens (strain ATCC 14718 / DSM 1338 / JCM 2805 / NCIMB 9133 / AM1) (Methylobacterium extorquens), this protein is 3-hydroxybutyryl-CoA dehydratase.